Here is a 98-residue protein sequence, read N- to C-terminus: Complement inhibitor RaCI2 (98 aa).

The signal sequence occupies residues 1–21; the sequence is MNAVTVLAFTAFALIVHDCYS. 3 disulfides stabilise this stretch: Cys-35-Cys-59, Cys-40-Cys-61, and Cys-55-Cys-76.

It belongs to the RaCI family. Expressed in salivary glands.

It localises to the secreted. Functionally, complement inhibitor. Prevents complement-mediated C5 activation by binding to C5. Binds C5 at a different binding site than the other tick complement inhibitors OmCI and CirpT1, and the drug eculizumab. The protein is Complement inhibitor RaCI2 of Rhipicephalus microplus (Cattle tick).